A 131-amino-acid polypeptide reads, in one-letter code: Sec-independent protein translocase protein TatB (131 aa).

A helical transmembrane segment spans residues 2–22 (FANIGWWEMLVLVMVGLVVLG). Positions 90–131 (DSLFTGDFDRPTPKKPDAAGSAGPDATEQIGAGPIPFDSDAT) are disordered. The span at 96-106 (DFDRPTPKKPD) shows a compositional bias: basic and acidic residues.

It belongs to the TatB family. As to quaternary structure, the Tat system comprises two distinct complexes: a TatABC complex, containing multiple copies of TatA, TatB and TatC subunits, and a separate TatA complex, containing only TatA subunits. Substrates initially bind to the TatABC complex, which probably triggers association of the separate TatA complex to form the active translocon.

The protein localises to the cell membrane. Functionally, part of the twin-arginine translocation (Tat) system that transports large folded proteins containing a characteristic twin-arginine motif in their signal peptide across membranes. Together with TatC, TatB is part of a receptor directly interacting with Tat signal peptides. TatB may form an oligomeric binding site that transiently accommodates folded Tat precursor proteins before their translocation. The sequence is that of Sec-independent protein translocase protein TatB from Mycobacterium tuberculosis (strain ATCC 25177 / H37Ra).